A 220-amino-acid polypeptide reads, in one-letter code: Ribose-5-phosphate isomerase A (220 aa).

Residues 29-32 (TGST), 82-85 (DGCD), and 95-98 (KGGG) each bind substrate. Glu-104 (proton acceptor) is an active-site residue. Lys-122 provides a ligand contact to substrate.

The protein belongs to the ribose 5-phosphate isomerase family. In terms of assembly, homodimer.

It catalyses the reaction aldehydo-D-ribose 5-phosphate = D-ribulose 5-phosphate. It participates in carbohydrate degradation; pentose phosphate pathway; D-ribose 5-phosphate from D-ribulose 5-phosphate (non-oxidative stage): step 1/1. Functionally, catalyzes the reversible conversion of ribose-5-phosphate to ribulose 5-phosphate. This chain is Ribose-5-phosphate isomerase A, found in Laribacter hongkongensis (strain HLHK9).